Consider the following 222-residue polypeptide: Ribosomal RNA small subunit methyltransferase G (222 aa).

Residues Gly80, Leu85, 131–132 (VE), and Arg148 contribute to the S-adenosyl-L-methionine site.

It belongs to the methyltransferase superfamily. RNA methyltransferase RsmG family.

It is found in the cytoplasm. It carries out the reaction guanosine(527) in 16S rRNA + S-adenosyl-L-methionine = N(7)-methylguanosine(527) in 16S rRNA + S-adenosyl-L-homocysteine. Its function is as follows. Specifically methylates the N7 position of guanine in position 527 of 16S rRNA. The protein is Ribosomal RNA small subunit methyltransferase G of Polynucleobacter asymbioticus (strain DSM 18221 / CIP 109841 / QLW-P1DMWA-1) (Polynucleobacter necessarius subsp. asymbioticus).